The sequence spans 200 residues: Serine/threonine-protein kinase mos (200 aa).

The Protein kinase domain maps to 2–200 (LCLLQPLGSG…ELLKGERVTA (199 aa)). Residues 8-16 (LGSGGFGSV) and K29 contribute to the ATP site. The active-site Proton acceptor is D143.

It belongs to the protein kinase superfamily. Ser/Thr protein kinase family.

It catalyses the reaction L-seryl-[protein] + ATP = O-phospho-L-seryl-[protein] + ADP + H(+). The enzyme catalyses L-threonyl-[protein] + ATP = O-phospho-L-threonyl-[protein] + ADP + H(+). This chain is Serine/threonine-protein kinase mos (MOS), found in Ciconia nigra (Black stork).